A 288-amino-acid chain; its full sequence is Putative movement protein (288 aa).

The segment at 207–288 (TGPRATLSQP…TSSRSRRVRG (82 aa)) is disordered.

Its function is as follows. Transports viral genome to neighboring plant cells directly through plasmosdesmata, without any budding. The movement protein allows efficient cell to cell propagation, by bypassing the host cell wall barrier (Potential). The polypeptide is Putative movement protein (Cucumis melo (Muskmelon)).